A 637-amino-acid polypeptide reads, in one-letter code: Threonine--tRNA ligase (637 aa).

The TGS domain occupies 1–61 (MLNITLPDGS…VEDSAVQIIT (61 aa)). A catalytic region spans residues 242–533 (DHRKLGKQLD…LIENHAGSFP (292 aa)). 3 residues coordinate Zn(2+): C333, H384, and H510.

This sequence belongs to the class-II aminoacyl-tRNA synthetase family. In terms of assembly, homodimer. Zn(2+) is required as a cofactor.

Its subcellular location is the cytoplasm. It catalyses the reaction tRNA(Thr) + L-threonine + ATP = L-threonyl-tRNA(Thr) + AMP + diphosphate + H(+). Its function is as follows. Catalyzes the attachment of threonine to tRNA(Thr) in a two-step reaction: L-threonine is first activated by ATP to form Thr-AMP and then transferred to the acceptor end of tRNA(Thr). Also edits incorrectly charged L-seryl-tRNA(Thr). This chain is Threonine--tRNA ligase, found in Neisseria meningitidis serogroup B (strain ATCC BAA-335 / MC58).